Consider the following 649-residue polypeptide: 2-hydroxyacyl-CoA lyase 2 (649 aa).

The helical transmembrane segment at phenylalanine 2–isoleucine 21 threads the bilayer. Glutamate 84 lines the thiamine diphosphate pocket. The tract at residues aspartate 474–cysteine 554 is thiamine pyrophosphate binding. Residues aspartate 525 and asparagine 551 each coordinate Mg(2+).

Belongs to the TPP enzyme family. Mg(2+) serves as cofactor. It depends on thiamine diphosphate as a cofactor.

It localises to the endoplasmic reticulum membrane. The catalysed reaction is 2-hydroxyoctadecanoyl-CoA = heptadecanal + formyl-CoA. The enzyme catalyses (2R)-hydroxyhexadecanoyl-CoA = pentadecanal + formyl-CoA. Its function is as follows. Endoplasmic reticulum 2-OH acyl-CoA lyase involved in the cleavage (C1 removal) reaction in the fatty acid alpha-oxydation in a thiamine pyrophosphate (TPP)-dependent manner. Involved in the phytosphingosine degradation pathway. This Xenopus laevis (African clawed frog) protein is 2-hydroxyacyl-CoA lyase 2 (ilvbl).